A 170-amino-acid chain; its full sequence is Flavodoxin (170 aa).

The Flavodoxin-like domain occupies 5 to 165 (IGLFYGTQTG…RIKSWVAQLK (161 aa)).

It belongs to the flavodoxin family. FMN is required as a cofactor.

In terms of biological role, low-potential electron donor to a number of redox enzymes. In Nostoc sp. (strain PCC 7120 / SAG 25.82 / UTEX 2576), this protein is Flavodoxin (isiB).